Consider the following 434-residue polypeptide: Glutamate-1-semialdehyde 2,1-aminomutase 1 (434 aa).

Position 270 is an N6-(pyridoxal phosphate)lysine (K270).

It belongs to the class-III pyridoxal-phosphate-dependent aminotransferase family. HemL subfamily. Homodimer. The cofactor is pyridoxal 5'-phosphate.

It localises to the cytoplasm. It carries out the reaction (S)-4-amino-5-oxopentanoate = 5-aminolevulinate. It participates in porphyrin-containing compound metabolism; protoporphyrin-IX biosynthesis; 5-aminolevulinate from L-glutamyl-tRNA(Glu): step 2/2. This chain is Glutamate-1-semialdehyde 2,1-aminomutase 1, found in Bacillus anthracis (strain A0248).